The following is a 221-amino-acid chain: ATP phosphoribosyltransferase (221 aa).

This sequence belongs to the ATP phosphoribosyltransferase family. Short subfamily. In terms of assembly, heteromultimer composed of HisG and HisZ subunits.

The protein localises to the cytoplasm. It catalyses the reaction 1-(5-phospho-beta-D-ribosyl)-ATP + diphosphate = 5-phospho-alpha-D-ribose 1-diphosphate + ATP. It functions in the pathway amino-acid biosynthesis; L-histidine biosynthesis; L-histidine from 5-phospho-alpha-D-ribose 1-diphosphate: step 1/9. In terms of biological role, catalyzes the condensation of ATP and 5-phosphoribose 1-diphosphate to form N'-(5'-phosphoribosyl)-ATP (PR-ATP). Has a crucial role in the pathway because the rate of histidine biosynthesis seems to be controlled primarily by regulation of HisG enzymatic activity. This is ATP phosphoribosyltransferase from Rhizorhabdus wittichii (strain DSM 6014 / CCUG 31198 / JCM 15750 / NBRC 105917 / EY 4224 / RW1) (Sphingomonas wittichii).